The chain runs to 546 residues: Sulfite oxidase, mitochondrial (546 aa).

The N-terminal 80 residues, 1–80 (MLPRLYRSVA…YHDHRCRASQ (80 aa)), are a transit peptide targeting the mitochondrion. Positions 83 to 162 (PRIYSKEDVR…LAEYKIGELN (80 aa)) constitute a Cytochrome b5 heme-binding domain. A heme b-binding site is contributed by His119. A Phosphoserine modification is found at Ser124. 3 residues coordinate heme b: His144, Gln146, and His148. The tract at residues 166–175 (RMSPPLEASD) is hinge. The segment at 176 to 402 (PYSNDPMRHP…YSHWQRRDYK (227 aa)) is moco domain. Mo-molybdopterin contacts are provided by residues 216–220 (FTRNH), Cys265, Asp323, His362, Arg367, and 378–380 (HVK). The interval 403-539 (GFSPSVDWDT…RGVLSNAWHR (137 aa)) is homodimerization.

As to quaternary structure, homodimer. It depends on heme b as a cofactor. The cofactor is Mo-molybdopterin.

The protein resides in the mitochondrion intermembrane space. It catalyses the reaction sulfite + O2 + H2O = sulfate + H2O2. Its pathway is energy metabolism; sulfur metabolism. In terms of biological role, catalyzes the oxidation of sulfite to sulfate, the terminal reaction in the oxidative degradation of sulfur-containing amino acids. This is Sulfite oxidase, mitochondrial from Rattus norvegicus (Rat).